Consider the following 392-residue polypeptide: Heat-inducible transcription repressor HrcA (392 aa).

The protein belongs to the HrcA family.

Negative regulator of class I heat shock genes (grpE-dnaK-dnaJ and groELS operons). Prevents heat-shock induction of these operons. In Chlamydia muridarum (strain MoPn / Nigg), this protein is Heat-inducible transcription repressor HrcA.